Consider the following 831-residue polypeptide: Probable glucan 1,3-beta-glucosidase D (831 aa).

Composition is skewed to basic and acidic residues over residues 1–24 (MPSHSRSRDRYRSERDPSRRYREV), 44–56 (RRDDYQHDIRSHE), 79–93 (RSHDVEGRRRERSRA), 102–115 (SRRDRNRGGEEYRR), 137–151 (RDGQRARPRDMDREA), and 198–213 (QRERSQEQEQPRMESK). Disordered regions lie at residues 1–179 (MPSH…SGSH) and 192–241 (HYDE…GQSK). Residues 1-297 (MPSHSRSRDR…AQPPFWKRKK (297 aa)) lie on the Cytoplasmic side of the membrane. A helical; Signal-anchor for type II membrane protein membrane pass occupies residues 298 to 318 (WWIVIGVLVVVLAIVIPVAVV). Residues 319–831 (MSKKHGHDDD…PSFGDLPEYY (513 aa)) are Extracellular-facing. Residues N376, N381, N393, N410, N442, N546, and N558 are each glycosylated (N-linked (GlcNAc...) asparagine). Residue E597 is the Proton donor of the active site. N610, N636, N669, and N689 each carry an N-linked (GlcNAc...) asparagine glycan. E702 (nucleophile) is an active-site residue.

It belongs to the glycosyl hydrolase 5 (cellulase A) family.

It localises to the cell membrane. The catalysed reaction is Successive hydrolysis of beta-D-glucose units from the non-reducing ends of (1-&gt;3)-beta-D-glucans, releasing alpha-glucose.. In terms of biological role, glucosidase involved in the degradation of cellulosic biomass. Active on lichenan. This is Probable glucan 1,3-beta-glucosidase D (exgD) from Aspergillus oryzae (strain ATCC 42149 / RIB 40) (Yellow koji mold).